Here is a 260-residue protein sequence, read N- to C-terminus: Hydroxyethylthiazole kinase 1 (260 aa).

Met39 is a substrate binding site. The ATP site is built by Arg115 and Thr160. Gly187 contributes to the substrate binding site.

This sequence belongs to the Thz kinase family. Requires Mg(2+) as cofactor.

The enzyme catalyses 5-(2-hydroxyethyl)-4-methylthiazole + ATP = 4-methyl-5-(2-phosphooxyethyl)-thiazole + ADP + H(+). The protein operates within cofactor biosynthesis; thiamine diphosphate biosynthesis; 4-methyl-5-(2-phosphoethyl)-thiazole from 5-(2-hydroxyethyl)-4-methylthiazole: step 1/1. In terms of biological role, catalyzes the phosphorylation of the hydroxyl group of 4-methyl-5-beta-hydroxyethylthiazole (THZ). The sequence is that of Hydroxyethylthiazole kinase 1 from Streptococcus pneumoniae (strain 70585).